The chain runs to 139 residues: Transcription antitermination protein NusB (139 aa).

Belongs to the NusB family.

Its function is as follows. Involved in transcription antitermination. Required for transcription of ribosomal RNA (rRNA) genes. Binds specifically to the boxA antiterminator sequence of the ribosomal RNA (rrn) operons. The chain is Transcription antitermination protein NusB from Escherichia coli (strain K12 / MC4100 / BW2952).